The sequence spans 541 residues: Chaperonin GroEL (541 aa).

ATP-binding positions include 29–32, 86–90, glycine 413, and aspartate 494; these read TLGP and DGTTT.

This sequence belongs to the chaperonin (HSP60) family. Forms a cylinder of 14 subunits composed of two heptameric rings stacked back-to-back. Interacts with the co-chaperonin GroES.

It localises to the cytoplasm. The enzyme catalyses ATP + H2O + a folded polypeptide = ADP + phosphate + an unfolded polypeptide.. Together with its co-chaperonin GroES, plays an essential role in assisting protein folding. The GroEL-GroES system forms a nano-cage that allows encapsulation of the non-native substrate proteins and provides a physical environment optimized to promote and accelerate protein folding. The protein is Chaperonin GroEL of Acetivibrio thermocellus (strain ATCC 27405 / DSM 1237 / JCM 9322 / NBRC 103400 / NCIMB 10682 / NRRL B-4536 / VPI 7372) (Clostridium thermocellum).